The sequence spans 154 residues: Deoxyuridine 5'-triphosphate nucleotidohydrolase (154 aa).

Substrate-binding positions include 72–74 (RSG), asparagine 85, 89–91 (LID), and methionine 99.

Belongs to the dUTPase family. Mg(2+) serves as cofactor.

The catalysed reaction is dUTP + H2O = dUMP + diphosphate + H(+). It functions in the pathway pyrimidine metabolism; dUMP biosynthesis; dUMP from dCTP (dUTP route): step 2/2. Functionally, this enzyme is involved in nucleotide metabolism: it produces dUMP, the immediate precursor of thymidine nucleotides and it decreases the intracellular concentration of dUTP so that uracil cannot be incorporated into DNA. This chain is Deoxyuridine 5'-triphosphate nucleotidohydrolase, found in Psychrobacter cryohalolentis (strain ATCC BAA-1226 / DSM 17306 / VKM B-2378 / K5).